The chain runs to 217 residues: 3,4-dihydroxy-2-butanone 4-phosphate synthase (217 aa).

Residues 37–38 (RE), D42, 150–154 (RGGHT), and E174 each bind D-ribulose 5-phosphate. Position 38 (E38) interacts with Mg(2+). H153 lines the Mg(2+) pocket.

It belongs to the DHBP synthase family. Homodimer. Requires Mg(2+) as cofactor. Mn(2+) is required as a cofactor.

The enzyme catalyses D-ribulose 5-phosphate = (2S)-2-hydroxy-3-oxobutyl phosphate + formate + H(+). The protein operates within cofactor biosynthesis; riboflavin biosynthesis; 2-hydroxy-3-oxobutyl phosphate from D-ribulose 5-phosphate: step 1/1. Catalyzes the conversion of D-ribulose 5-phosphate to formate and 3,4-dihydroxy-2-butanone 4-phosphate. The protein is 3,4-dihydroxy-2-butanone 4-phosphate synthase of Sodalis glossinidius (strain morsitans).